We begin with the raw amino-acid sequence, 505 residues long: Protein disulfide-isomerase A3 (505 aa).

Residues Met1 to Ala24 form the signal peptide. Residues Ser25–Gly133 form the Thioredoxin 1 domain. Active-site nucleophile residues include Cys57 and Cys60. A disulfide bond links Cys57 and Cys60. Residue Lys61 is modified to N6-methyllysine. Cys85 and Cys92 are disulfide-bonded. Lys129 carries the N6-succinyllysine modification. N6-acetyllysine is present on Lys152. Lys218 bears the N6-succinyllysine mark. Lys252 carries the N6-acetyllysine modification. Phosphothreonine is present on Thr319. Positions Ser343–Thr485 constitute a Thioredoxin 2 domain. Lys362 bears the N6-acetyllysine mark. Active-site nucleophile residues include Cys406 and Cys409. A disulfide bridge connects residues Cys406 and Cys409. The disordered stretch occupies residues Ala484 to Leu505. A compositionally biased stretch (basic and acidic residues) spans Gln491 to Leu505. Lys494 is subject to N6-acetyllysine. Positions Gln502–Leu505 match the Prevents secretion from ER motif.

The protein belongs to the protein disulfide isomerase family. As to quaternary structure, part of the major histocompatibility complex class I (MHC I) peptide loading complex composed of TAP1, TAP2, B2M, MHC heavy chain, TAPBP, PDIA3, and CALR. Interacts with ERP27 and CANX. Interacts with SERPINA2 and with SERPINA1. Interacts with ATP2A2. Post-translationally, within the major histocompatibility complex class I (MHC I) peptide loading complex forms reversible disulfide-linked heterodimers with TAPBP as part of its protein folding chaperone activity. This is essential to assist the dynamic assembly of the MHC I complex with high affinity antigens in the endoplasmic reticulum. Phosphorylated. In caput epididymal spermatozoa, detected in the head, mid and principal pieces. In cauda epididymal spermatozoa detected only in the acrosome (at protein level).

The protein localises to the endoplasmic reticulum. The protein resides in the endoplasmic reticulum lumen. It is found in the melanosome. It carries out the reaction Catalyzes the rearrangement of -S-S- bonds in proteins.. Its activity is regulated as follows. Seems to be inhibited by acidic phospholipids. Protein disulfide isomerase that catalyzes the formation, isomerization, and reduction or oxidation of disulfide bonds in client proteins and functions as a protein folding chaperone. Core component of the major histocompatibility complex class I (MHC I) peptide loading complex where it functions as an essential folding chaperone for TAPBP. Through TAPBP, assists the dynamic assembly of the MHC I complex with high affinity antigens in the endoplasmic reticulum. Therefore, plays a crucial role in the presentation of antigens to cytotoxic T cells in adaptive immunity. The sequence is that of Protein disulfide-isomerase A3 (Pdia3) from Rattus norvegicus (Rat).